Consider the following 305-residue polypeptide: Oxygen-dependent coproporphyrinogen-III oxidase (305 aa).

A substrate-binding site is contributed by S93. Residues H97 and H107 each contribute to the a divalent metal cation site. The Proton donor role is filled by H107. Position 109-111 (109-111 (NVR)) interacts with substrate. A divalent metal cation is bound by residues H146 and H176. Residues 241-276 (YVEFNLVFDRGTLFGLQSGGRTESILMSLPPQVRWG) are important for dimerization. 259-261 (GGR) contributes to the substrate binding site.

The protein belongs to the aerobic coproporphyrinogen-III oxidase family. In terms of assembly, homodimer. A divalent metal cation is required as a cofactor.

The protein localises to the cytoplasm. It carries out the reaction coproporphyrinogen III + O2 + 2 H(+) = protoporphyrinogen IX + 2 CO2 + 2 H2O. The protein operates within porphyrin-containing compound metabolism; protoporphyrin-IX biosynthesis; protoporphyrinogen-IX from coproporphyrinogen-III (O2 route): step 1/1. Functionally, involved in the heme biosynthesis. Catalyzes the aerobic oxidative decarboxylation of propionate groups of rings A and B of coproporphyrinogen-III to yield the vinyl groups in protoporphyrinogen-IX. The protein is Oxygen-dependent coproporphyrinogen-III oxidase of Pseudomonas paraeruginosa (strain DSM 24068 / PA7) (Pseudomonas aeruginosa (strain PA7)).